Consider the following 669-residue polypeptide: DNA ligase (669 aa).

NAD(+)-binding positions include 31–35 (DSVYD), 80–81 (SL), and Glu112. Residue Lys114 is the N6-AMP-lysine intermediate of the active site. The NAD(+) site is built by Arg135, Glu172, Lys289, and Lys313. Residues Cys407, Cys410, Cys425, and Cys430 each contribute to the Zn(2+) site. In terms of domain architecture, BRCT spans 591 to 669 (TDSGKLKGKT…EAEFLQLLEP (79 aa)).

This sequence belongs to the NAD-dependent DNA ligase family. LigA subfamily. Mg(2+) serves as cofactor. Mn(2+) is required as a cofactor.

It catalyses the reaction NAD(+) + (deoxyribonucleotide)n-3'-hydroxyl + 5'-phospho-(deoxyribonucleotide)m = (deoxyribonucleotide)n+m + AMP + beta-nicotinamide D-nucleotide.. DNA ligase that catalyzes the formation of phosphodiester linkages between 5'-phosphoryl and 3'-hydroxyl groups in double-stranded DNA using NAD as a coenzyme and as the energy source for the reaction. It is essential for DNA replication and repair of damaged DNA. This Synechocystis sp. (strain ATCC 27184 / PCC 6803 / Kazusa) protein is DNA ligase.